The chain runs to 1367 residues: Histone acetyltransferase HAC2 (1367 aa).

Positions Thr-110–Ser-151 are disordered. The segment covering Ser-111–Ser-127 has biased composition (low complexity). Basic and acidic residues predominate over residues Thr-130 to Lys-144. Repeat copies occupy residues Lys-188 to Lys-200, Lys-223 to Lys-235, Lys-251 to Lys-263, Lys-286 to Lys-298, Lys-314 to Lys-326, Lys-349 to Lys-361, Lys-377 to Lys-389, Lys-418 to Lys-430, Asp-432 to Lys-444, Lys-459 to Lys-471, Asp-473 to Lys-485, and Lys-500 to Lys-512. Residues Lys-188–Lys-512 are 12 X 13 AA approximate repeats. Residues His-688 to Glu-765 form a PHD-type zinc finger. The CBP/p300-type HAT domain occupies Asp-780–Lys-1213. Residues Leu-903 to Ser-905, Arg-922 to Thr-923, and Trp-978 contribute to the acetyl-CoA site. Residues Glu-1094–Val-1157 form a ZZ-type 1; degenerate zinc finger. Residues Cys-1099, Cys-1102, Cys-1123, Cys-1126, Cys-1225, Cys-1228, Cys-1240, Cys-1243, Cys-1249, Cys-1252, His-1261, and His-1263 each coordinate Zn(2+). The ZZ-type 2 zinc finger occupies Ser-1220–Arg-1273. The segment at Ala-1274–Arg-1359 adopts a TAZ-type zinc-finger fold.

In terms of tissue distribution, rosette leaves, stems and flowers.

It localises to the nucleus. The catalysed reaction is L-lysyl-[protein] + acetyl-CoA = N(6)-acetyl-L-lysyl-[protein] + CoA + H(+). Its function is as follows. Acetyltransferase enzyme. Acetylates histones, giving a specific tag for transcriptional activation. No acetyltransferase activity found in vitro. The protein is Histone acetyltransferase HAC2 (HAC2) of Arabidopsis thaliana (Mouse-ear cress).